Here is a 311-residue protein sequence, read N- to C-terminus: UDP-N-acetylenolpyruvoylglucosamine reductase (311 aa).

In terms of domain architecture, FAD-binding PCMH-type spans 34–198 (MGGAADLFIT…LEGTFRLQKG (165 aa)). The active site involves Arg-177. The Proton donor role is filled by Ser-227. Glu-297 is a catalytic residue.

The protein belongs to the MurB family. FAD is required as a cofactor.

It localises to the cytoplasm. The enzyme catalyses UDP-N-acetyl-alpha-D-muramate + NADP(+) = UDP-N-acetyl-3-O-(1-carboxyvinyl)-alpha-D-glucosamine + NADPH + H(+). Its pathway is cell wall biogenesis; peptidoglycan biosynthesis. In terms of biological role, cell wall formation. In Shouchella clausii (strain KSM-K16) (Alkalihalobacillus clausii), this protein is UDP-N-acetylenolpyruvoylglucosamine reductase.